Here is a 223-residue protein sequence, read N- to C-terminus: N-(5'-phosphoribosyl)anthranilate isomerase (223 aa).

It belongs to the TrpF family.

It carries out the reaction N-(5-phospho-beta-D-ribosyl)anthranilate = 1-(2-carboxyphenylamino)-1-deoxy-D-ribulose 5-phosphate. It functions in the pathway amino-acid biosynthesis; L-tryptophan biosynthesis; L-tryptophan from chorismate: step 3/5. In Bradyrhizobium diazoefficiens (strain JCM 10833 / BCRC 13528 / IAM 13628 / NBRC 14792 / USDA 110), this protein is N-(5'-phosphoribosyl)anthranilate isomerase.